We begin with the raw amino-acid sequence, 794 residues long: Phenylalanine--tRNA ligase beta subunit (794 aa).

The region spanning 40–158 (NSLNSELILG…LKKYIGSDVK (119 aa)) is the tRNA-binding domain. The B5 domain maps to 402 to 477 (KNKQSLEIKL…RLYSYDKIDE (76 aa)). Residues Asp455, Asp461, Glu464, and Glu465 each coordinate Mg(2+). The 93-residue stretch at 702–794 (SKFQSSSRDL…NIKQMKVVIR (93 aa)) folds into the FDX-ACB domain.

Belongs to the phenylalanyl-tRNA synthetase beta subunit family. Type 1 subfamily. Tetramer of two alpha and two beta subunits. Mg(2+) is required as a cofactor.

Its subcellular location is the cytoplasm. It carries out the reaction tRNA(Phe) + L-phenylalanine + ATP = L-phenylalanyl-tRNA(Phe) + AMP + diphosphate + H(+). The protein is Phenylalanine--tRNA ligase beta subunit of Mycoplasma mycoides subsp. mycoides SC (strain CCUG 32753 / NCTC 10114 / PG1).